The primary structure comprises 112 residues: UPF0102 protein CHAB381_0216 (112 aa).

It belongs to the UPF0102 family.

In Campylobacter hominis (strain ATCC BAA-381 / DSM 21671 / CCUG 45161 / LMG 19568 / NCTC 13146 / CH001A), this protein is UPF0102 protein CHAB381_0216.